The sequence spans 216 residues: MFMARQVLRNGLFLRSLAPIKITARTVASANAGIKRKSRFDKTMIKPLLLVMIFGSILNAVIAEKRNIIDMERKYKLKLDKLKELIRRVHDNNGKVDFDADDELKLVNLRLGIVGKNATGMKEDETDIVVPKEESLEEIWQSIIDEAKKEVIEKTPDAGVKNKEGIVTDLNVLKDLEKSKKEDEKVYLSGDVHMMMNQPGDLNEIAKEHDKIPKFL.

A mitochondrion-targeting transit peptide spans 1–26; it reads MFMARQVLRNGLFLRSLAPIKITART. The Mitochondrial matrix portion of the chain corresponds to 27 to 43; it reads VASANAGIKRKSRFDKT. The helical transmembrane segment at 44-63 threads the bilayer; sequence MIKPLLLVMIFGSILNAVIA. The stretch at 64–93 forms a coiled coil; sequence EKRNIIDMERKYKLKLDKLKELIRRVHDNN. Topologically, residues 64–216 are mitochondrial intermembrane; that stretch reads EKRNIIDMER…KEHDKIPKFL (153 aa).

As to quaternary structure, component of the inner membrane assembly (INA) complex, composed of INA17 and INA22. Interacts with a subset of F(1)F(0)-ATP synthase subunits of the F(1)-domain and the peripheral stalk.

It is found in the mitochondrion inner membrane. Its function is as follows. Component of the INA complex (INAC) that promotes the biogenesis of mitochondrial F(1)F(0)-ATP synthase. INAC facilitates the assembly of the peripheral stalk and promotes the assembly of the catalytic F(1)-domain with the membrane-embedded F(0)-domain. The sequence is that of Inner membrane assembly complex subunit 22 from Saccharomyces cerevisiae (strain ATCC 204508 / S288c) (Baker's yeast).